Consider the following 52-residue polypeptide: UPF0391 membrane protein ABAYE0050 (52 aa).

Helical transmembrane passes span 6 to 26 (IIFA…VAGL) and 30 to 50 (FAVI…ISRG).

It belongs to the UPF0391 family.

It localises to the cell membrane. In Acinetobacter baumannii (strain AYE), this protein is UPF0391 membrane protein ABAYE0050.